Here is a 215-residue protein sequence, read N- to C-terminus: LexA repressor (215 aa).

The H-T-H motif DNA-binding region spans 28–48 (RAEIAAELGFSSPNAAEEHLR). Active-site for autocatalytic cleavage activity residues include Ser133 and Lys170.

It belongs to the peptidase S24 family. In terms of assembly, homodimer.

It catalyses the reaction Hydrolysis of Ala-|-Gly bond in repressor LexA.. Represses a number of genes involved in the response to DNA damage (SOS response), including recA and lexA. In the presence of single-stranded DNA, RecA interacts with LexA causing an autocatalytic cleavage which disrupts the DNA-binding part of LexA, leading to derepression of the SOS regulon and eventually DNA repair. The polypeptide is LexA repressor (Burkholderia ambifaria (strain ATCC BAA-244 / DSM 16087 / CCUG 44356 / LMG 19182 / AMMD) (Burkholderia cepacia (strain AMMD))).